The chain runs to 259 residues: Trypsin (259 aa).

The N-terminal stretch at 1 to 32 (MKHFLRALKRCSVAVATVAIAVVGLQPVTASA) is a signal peptide. Residues 33-36 (APNP) constitute a propeptide, activation peptide. Residues 37-257 (VVGGTRAAQG…FASAIASAAR (221 aa)) form the Peptidase S1 domain. Cysteines 58 and 74 form a disulfide. Active-site charge relay system residues include His73 and Asp118. Intrachain disulfides connect Cys177–Cys192 and Cys204–Cys233. The active-site Charge relay system is the Ser208.

This sequence belongs to the peptidase S1 family.

It catalyses the reaction Preferential cleavage: Arg-|-Xaa, Lys-|-Xaa.. In Streptomyces griseus, this protein is Trypsin (sprT).